The sequence spans 157 residues: Endoribonuclease YbeY (157 aa).

Zn(2+) is bound by residues histidine 116, histidine 120, and histidine 126.

The protein belongs to the endoribonuclease YbeY family. The cofactor is Zn(2+).

The protein resides in the cytoplasm. Its function is as follows. Single strand-specific metallo-endoribonuclease involved in late-stage 70S ribosome quality control and in maturation of the 3' terminus of the 16S rRNA. The polypeptide is Endoribonuclease YbeY (Paenarthrobacter aurescens (strain TC1)).